The chain runs to 506 residues: Ribose import ATP-binding protein RbsA 2 (506 aa).

ABC transporter domains lie at Leu-5–Arg-241 and Val-251–Thr-498. Position 37–44 (Gly-37–Ser-44) interacts with ATP.

Belongs to the ABC transporter superfamily. Ribose importer (TC 3.A.1.2.1) family. The complex is composed of an ATP-binding protein (RbsA), two transmembrane proteins (RbsC) and a solute-binding protein (RbsB).

Its subcellular location is the cell inner membrane. The enzyme catalyses D-ribose(out) + ATP + H2O = D-ribose(in) + ADP + phosphate + H(+). In terms of biological role, part of the ABC transporter complex RbsABC involved in ribose import. Responsible for energy coupling to the transport system. The protein is Ribose import ATP-binding protein RbsA 2 of Burkholderia ambifaria (strain ATCC BAA-244 / DSM 16087 / CCUG 44356 / LMG 19182 / AMMD) (Burkholderia cepacia (strain AMMD)).